Reading from the N-terminus, the 154-residue chain is Metallothiol transferase FosB (154 aa).

In terms of domain architecture, VOC spans 8-123; that stretch reads GINHLLFSVS…DGHKFELHTG (116 aa). Residues H11, H70, and E119 each contribute to the Mg(2+) site. The active-site Proton donor/acceptor is the E119.

This sequence belongs to the fosfomycin resistance protein family. FosB subfamily. Homodimer. The cofactor is Mg(2+).

It is found in the cytoplasm. In terms of biological role, metallothiol transferase which confers resistance to fosfomycin by catalyzing the addition of a thiol cofactor to fosfomycin. L-cysteine is probably the physiological thiol donor. This is Metallothiol transferase FosB from Bacillus licheniformis (strain ATCC 14580 / DSM 13 / JCM 2505 / CCUG 7422 / NBRC 12200 / NCIMB 9375 / NCTC 10341 / NRRL NRS-1264 / Gibson 46).